The chain runs to 772 residues: 5-methyltetrahydropteroyltriglutamate--homocysteine methyltransferase (772 aa).

Residues 24 to 27 and lysine 120 contribute to the 5-methyltetrahydropteroyltri-L-glutamate site; that span reads RELK. A disordered region spans residues 404-428; it reads DPAVRSRTAATTDADARRSGPYPER. L-homocysteine is bound by residues 446-448 and glutamate 499; that span reads IGS. L-methionine contacts are provided by residues 446-448 and glutamate 499; that span reads IGS. Tryptophan 576 contributes to the 5-methyltetrahydropteroyltri-L-glutamate binding site. Aspartate 614 lines the L-homocysteine pocket. L-methionine is bound at residue aspartate 614. Glutamate 620 lines the 5-methyltetrahydropteroyltri-L-glutamate pocket. Zn(2+)-binding residues include histidine 656, cysteine 658, and glutamate 680. The Proton donor role is filled by histidine 709. Cysteine 741 is a binding site for Zn(2+).

The protein belongs to the vitamin-B12 independent methionine synthase family. Zn(2+) is required as a cofactor.

It carries out the reaction 5-methyltetrahydropteroyltri-L-glutamate + L-homocysteine = tetrahydropteroyltri-L-glutamate + L-methionine. The protein operates within amino-acid biosynthesis; L-methionine biosynthesis via de novo pathway; L-methionine from L-homocysteine (MetE route): step 1/1. Its function is as follows. Catalyzes the transfer of a methyl group from 5-methyltetrahydrofolate to homocysteine resulting in methionine formation. The chain is 5-methyltetrahydropteroyltriglutamate--homocysteine methyltransferase from Streptomyces avermitilis (strain ATCC 31267 / DSM 46492 / JCM 5070 / NBRC 14893 / NCIMB 12804 / NRRL 8165 / MA-4680).